Reading from the N-terminus, the 173-residue chain is Superoxide dismutase [Cu-Zn] 2 (173 aa).

An N-terminal signal peptide occupies residues 1 to 19 (MKRLSLAMVTLLACAGAQA). Cu cation is bound by residues H67, H69, and H92. Residues C74 and C169 are joined by a disulfide bond. Residues H92, H101, H109, and D112 each coordinate Zn(2+). Cu cation is bound at residue H147.

It belongs to the Cu-Zn superoxide dismutase family. Monomer. Requires Cu cation as cofactor. Zn(2+) serves as cofactor.

Its subcellular location is the periplasm. It catalyses the reaction 2 superoxide + 2 H(+) = H2O2 + O2. Functionally, destroys radicals which are normally produced within the cells and which are toxic to biological systems. This Salmonella typhimurium (strain LT2 / SGSC1412 / ATCC 700720) protein is Superoxide dismutase [Cu-Zn] 2 (sodC).